The chain runs to 78 residues: MGGYVNIKTFTHPAGEGKEVKGMEVSVPFEIYSNEHRIADAHYQTFPSEKAAYTTVVTDAADWRTKNAAMFTPTPVSG.

This sequence belongs to the Tevenvirinae Soc family. As to quaternary structure, homotrimer. Interacts with the major capsid protein; three soc molecules associate with each interface between the major capsid protein facets.

Its subcellular location is the virion. In terms of biological role, capsid decoration protein which helps to stabilize the capsid against extremes of pH and temperature. Once maturation and expansion of the capsid has occured, trimers of soc attach the interfaces between the hexamer of the major capsid protein. Acts as a 'glue' between neighboring hexameric capsomers. Dispensable for the head morphogenesis and phage infection. The chain is Small outer capsid protein from Escherichia phage RB69 (Bacteriophage RB69).